Reading from the N-terminus, the 470-residue chain is Serine/threonine-protein kinase PEPKR2 (470 aa).

The region spanning 107 to 355 (YVFGRNIGKG…ADEVLRHPWI (249 aa)) is the Protein kinase domain. Residues 113-121 (IGKGKFGSV) and K136 contribute to the ATP site. The Proton acceptor role is filled by D224. Residues 377-386 (GSSTCLQNRS) show a composition bias toward polar residues. Disordered regions lie at residues 377–419 (GSST…EEED) and 441–464 (RSRVCSPTNNPIEQQHSSNLTSTS). Positions 387 to 403 (PTEKTDLNRADREKKIP) are enriched in basic and acidic residues. Over residues 445–464 (CSPTNNPIEQQHSSNLTSTS) the composition is skewed to polar residues.

It belongs to the protein kinase superfamily. Ser/Thr protein kinase family.

The catalysed reaction is L-seryl-[protein] + ATP = O-phospho-L-seryl-[protein] + ADP + H(+). It carries out the reaction L-threonyl-[protein] + ATP = O-phospho-L-threonyl-[protein] + ADP + H(+). The polypeptide is Serine/threonine-protein kinase PEPKR2 (PEPKR2) (Arabidopsis thaliana (Mouse-ear cress)).